The sequence spans 607 residues: Kelch repeat and BTB domain-containing protein 3 (607 aa).

The BTB domain maps to 48 to 115; that stretch reads YDFKIIMKEE…AYTGKTRITD (68 aa). The BACK domain maps to 150 to 250; sequence CLHLLSLSDS…QLSEDTLQDY (101 aa). Kelch repeat units lie at residues 291–337, 339–390, 400–450, 452–502, and 548–595; these read KYIF…SSYG, KIFL…TPRT, RLFV…ACQN, IYVL…KAVP, and KIYI…VIQF.

This is Kelch repeat and BTB domain-containing protein 3 from Mus musculus (Mouse).